We begin with the raw amino-acid sequence, 409 residues long: Peptidase T (409 aa).

Zn(2+) is bound at residue His78. Asp80 is an active-site residue. Residue Asp140 coordinates Zn(2+). The active-site Proton acceptor is Glu173. 3 residues coordinate Zn(2+): Glu174, Asp196, and His379.

The protein belongs to the peptidase M20B family. Requires Zn(2+) as cofactor.

The protein resides in the cytoplasm. It catalyses the reaction Release of the N-terminal residue from a tripeptide.. In terms of biological role, cleaves the N-terminal amino acid of tripeptides. The polypeptide is Peptidase T (Salmonella agona (strain SL483)).